The chain runs to 412 residues: O-acetyl-L-homoserine sulfhydrylase 2 (412 aa).

Lys202 is subject to N6-(pyridoxal phosphate)lysine.

The protein belongs to the trans-sulfuration enzymes family. Homotetramer. The cofactor is pyridoxal 5'-phosphate.

The catalysed reaction is O-acetyl-L-homoserine + hydrogen sulfide = L-homocysteine + acetate. With respect to regulation, inhibited by the carbonyl reagents hydroxylamine and phenylhydrazine. Also inhibited by methionine and propargylglycine. In terms of biological role, catalyzes the conversion of O-acetyl-L-homoserine (OAH) into homocysteine in the methionine biosynthesis pathway. Has weak activity with O-acetyl-L-serine, O-phospho-L-serine, L-serine, O-succinyl-L-homoserine and L-homoserine. Shows a very low CTT gamma-synthase activity. The polypeptide is O-acetyl-L-homoserine sulfhydrylase 2 (Thermus thermophilus (strain ATCC 27634 / DSM 579 / HB8)).